The chain runs to 93 residues: Probable Fe(2+)-trafficking protein (93 aa).

Belongs to the Fe(2+)-trafficking protein family.

Could be a mediator in iron transactions between iron acquisition and iron-requiring processes, such as synthesis and/or repair of Fe-S clusters in biosynthetic enzymes. This Polaromonas naphthalenivorans (strain CJ2) protein is Probable Fe(2+)-trafficking protein.